We begin with the raw amino-acid sequence, 252 residues long: Nuclease C1 (252 aa).

Histidine 87 functions as the Proton acceptor in the catalytic mechanism. Residue asparagine 119 participates in Mg(2+) binding.

Belongs to the DNA/RNA non-specific endonuclease family. It depends on Mg(2+) as a cofactor. The cofactor is Mn(2+).

It localises to the secreted. This enzyme has both RNase and DNase activity. This chain is Nuclease C1 (NUC1CE), found in Cunninghamella echinulata var. echinulata.